The primary structure comprises 323 residues: Fructokinase-1 (323 aa).

The protein belongs to the carbohydrate kinase PfkB family. In terms of tissue distribution, expressed in root, endosperm and leaf tissues.

The catalysed reaction is D-fructose + ATP = D-fructose 6-phosphate + ADP + H(+). It functions in the pathway glycan biosynthesis; starch biosynthesis. Completely inhibited at 50 mM ATP, but not inhibited at high fructose concentration. Functionally, fructokinase that may play an important role in maintaining the flux of carbon towards starch formation. May also be involved in a sugar-sensing pathway. In Oryza sativa subsp. japonica (Rice), this protein is Fructokinase-1.